A 427-amino-acid chain; its full sequence is Serine protease inhibitor 88Ea (427 aa).

A signal peptide spans 1–18 (MHILSISLMAVLPAIALA). Asn224 is a glycosylation site (N-linked (GlcNAc...) asparagine).

This sequence belongs to the serpin family. In terms of tissue distribution, expressed in nurse cells and oocytes. Expressed in wings.

It is found in the secreted. Serine protease inhibitor with activity toward trypsin. Negatively regulates the Toll signaling pathway and suppresses the expression of the antifungal peptide drosomycin. Its negative regulation of the Toll signaling pathway also results in the inhibition of the melanization immune response via the phenoloxidase (PPO1) cascade. Essential for unfolding and expansion of the wings after emergence from the pupal case. May regulate the Toll pathway by blocking the proteolysis of the Toll ligand spz. This Drosophila melanogaster (Fruit fly) protein is Serine protease inhibitor 88Ea.